A 1040-amino-acid chain; its full sequence is Multidrug resistance protein MdtB (1040 aa).

A run of 12 helical transmembrane segments spans residues 25-45 (LLMV…PVSA), 347-367 (LMMA…NIPA), 369-389 (IIPG…MVFL), 396-416 (LTLM…IVVI), 440-460 (IGFT…PLLF), 472-492 (FAIT…TLTP), 537-557 (WLTL…WVFI), 863-883 (LGST…VLGI), 888-908 (FIHP…ALLA), 911-931 (IAGS…IGIV), 968-988 (ILMT…STGV), and 998-1018 (IGMV…TPVI).

It belongs to the resistance-nodulation-cell division (RND) (TC 2.A.6) family. MdtB subfamily. As to quaternary structure, part of a tripartite efflux system composed of MdtA, MdtB and MdtC. MdtB forms a heteromultimer with MdtC.

It is found in the cell inner membrane. In terms of biological role, the MdtABC tripartite complex confers resistance against novobiocin and deoxycholate. In Escherichia coli O127:H6 (strain E2348/69 / EPEC), this protein is Multidrug resistance protein MdtB.